The following is a 263-amino-acid chain: MKGVVIFGIHHWGFSVRVPRTSAGGSSYIVPPITTILGALSRGYCSDYAVKNNVSCTKEFIDKFSSDLFWVTYGTEEHMLMPYSDLLREERVPYRQSKNRSLDHVSDWFGVSAFGKVYCENVNFSILLLLNKENSEFWSKLGWQIISLGTKESLVTITDVKVVDVEESSDEDIYTIYYIPAECLTNTEEFEVVNMPVKSVYELSSKPSIGVFSNFLVPRKTPFIGGKVKVKKSNVRGDICKVYKMADKYVITFKEGLEKWYSK.

It belongs to the CRISPR-associated protein Cas5 family. Subtype I-A/Apern subfamily. Part of the aCascade ribonucleoprotein complex, minimally composed of Csa2 and Cas5a, which binds crRNA. Other possible components of aCascade in strain P1 are Cas6b (SSO1437) and Csa5 (SSO1443), while SSO1399, Cas5b (SSO1400) and SSO1401 have sometimes been seen weakly associated. Csa2 is probably the major RNA-binding subunit. The Csa2-Cas5a-crRNA complex also binds target DNA homologous to crRNA, probably forming an R-loop. Purified aCascade forms a filament about 6 nm in width.

In terms of biological role, CRISPR (clustered regularly interspaced short palindromic repeat) is an adaptive immune system that provides protection against mobile genetic elements (viruses, transposable elements and conjugative plasmids). CRISPR clusters contain spacers, sequences complementary to antecedent mobile elements, and target invading nucleic acids. CRISPR clusters are transcribed and processed into CRISPR RNA (crRNA). The sequence is that of CRISPR-associated protein Cas5 2 (cas5b) from Saccharolobus solfataricus (strain ATCC 35092 / DSM 1617 / JCM 11322 / P2) (Sulfolobus solfataricus).